The sequence spans 241 residues: Platelet-derived growth factor subunit B (241 aa).

A signal peptide spans Met-1–Ala-20. The propeptide at Glu-21–Arg-81 is removed in mature form. Asn-63 is a glycosylation site (N-linked (GlcNAc...) asparagine). 3 disulfide bridges follow: Cys-97–Cys-141, Cys-130–Cys-178, and Cys-134–Cys-180. The propeptide at Thr-191–Ala-241 is removed in mature form. Basic residues predominate over residues Arg-217–His-230. The interval Arg-217–Ala-241 is disordered.

Belongs to the PDGF/VEGF growth factor family. In terms of assembly, antiparallel homodimer; disulfide-linked. Antiparallel heterodimer with PDGFA; disulfide-linked. The PDGFB homodimer interacts with PDGFRA and PDGFRB homodimers, and with heterodimers formed by PDGFRA and PDGFRB. The heterodimer composed of PDGFA and PDGFB interacts with PDGFRB homodimers, and with heterodimers formed by PDGFRA and PDGFRB. Interacts with XLKD1. Interacts with LRP1. Interacts with SORL1 (via the N-terminal ectodomain). Interacts with CD82; this interaction inhibits PDGFB-mediated signaling pathway.

The protein localises to the secreted. Its function is as follows. Growth factor that plays an essential role in the regulation of embryonic development, cell proliferation, cell migration, survival and chemotaxis. Potent mitogen for cells of mesenchymal origin. Required for normal proliferation and recruitment of pericytes and vascular smooth muscle cells in the central nervous system, skin, lung, heart and placenta. Required for normal blood vessel development, and for normal development of kidney glomeruli. Plays an important role in wound healing. Signaling is modulated by the formation of heterodimers with PDGFA. The sequence is that of Platelet-derived growth factor subunit B (PDGFB) from Ovis aries (Sheep).